We begin with the raw amino-acid sequence, 288 residues long: Bifunctional protein FolD (288 aa).

Residues 166 to 168 (GAS) and isoleucine 232 each bind NADP(+).

Belongs to the tetrahydrofolate dehydrogenase/cyclohydrolase family. In terms of assembly, homodimer.

It catalyses the reaction (6R)-5,10-methylene-5,6,7,8-tetrahydrofolate + NADP(+) = (6R)-5,10-methenyltetrahydrofolate + NADPH. It carries out the reaction (6R)-5,10-methenyltetrahydrofolate + H2O = (6R)-10-formyltetrahydrofolate + H(+). It participates in one-carbon metabolism; tetrahydrofolate interconversion. Its function is as follows. Catalyzes the oxidation of 5,10-methylenetetrahydrofolate to 5,10-methenyltetrahydrofolate and then the hydrolysis of 5,10-methenyltetrahydrofolate to 10-formyltetrahydrofolate. The polypeptide is Bifunctional protein FolD (Citrobacter koseri (strain ATCC BAA-895 / CDC 4225-83 / SGSC4696)).